The chain runs to 229 residues: Ribosomal RNA small subunit methyltransferase G (229 aa).

Residues Gly-87, Leu-92, 138–139 (VE), and Arg-154 contribute to the S-adenosyl-L-methionine site.

The protein belongs to the methyltransferase superfamily. RNA methyltransferase RsmG family.

The protein resides in the cytoplasm. The enzyme catalyses guanosine(527) in 16S rRNA + S-adenosyl-L-methionine = N(7)-methylguanosine(527) in 16S rRNA + S-adenosyl-L-homocysteine. Its function is as follows. Specifically methylates the N7 position of guanine in position 527 of 16S rRNA. In Oleidesulfovibrio alaskensis (strain ATCC BAA-1058 / DSM 17464 / G20) (Desulfovibrio alaskensis), this protein is Ribosomal RNA small subunit methyltransferase G.